We begin with the raw amino-acid sequence, 189 residues long: Threonylcarbamoyl-AMP synthase (189 aa).

Positions 7 to 189 constitute a YrdC-like domain; sequence NPRVNYAANM…LLTGQVVRPS (183 aa).

This sequence belongs to the SUA5 family. TsaC subfamily.

It localises to the cytoplasm. The catalysed reaction is L-threonine + hydrogencarbonate + ATP = L-threonylcarbamoyladenylate + diphosphate + H2O. Required for the formation of a threonylcarbamoyl group on adenosine at position 37 (t(6)A37) in tRNAs that read codons beginning with adenine. Catalyzes the conversion of L-threonine, HCO(3)(-)/CO(2) and ATP to give threonylcarbamoyl-AMP (TC-AMP) as the acyladenylate intermediate, with the release of diphosphate. The polypeptide is Threonylcarbamoyl-AMP synthase (Cellvibrio japonicus (strain Ueda107) (Pseudomonas fluorescens subsp. cellulosa)).